The primary structure comprises 507 residues: Blue light receptor lreB (507 aa).

The PAS domain maps to 170-234 (RVLNEMKDML…EEMNECITTT (65 aa)). The GATA-type zinc finger occupies 463–488 (CTDCGTSDSPEWRKGPEGPKTLCNAC).

Probable transcription factor involved in light regulation. Plays crucial roles in fungal growth and asexual development. Involved in conidiophore formation, sclerotium production, and conidial stress tolerance. Positively regulates the fungal pathogenicity towards maize and aflatoxin B1 production. The polypeptide is Blue light receptor lreB (Aspergillus flavus).